The following is a 924-amino-acid chain: TBC1 domain family member 2A (924 aa).

Positions 1–38 (MEDTPERTPSSESIQPPGLAREPEVTSPGDSEGCARPL) are disordered. Residues 1-167 (MEDTPERTPS…TENGPTLHLK (167 aa)) are interaction with CADH1. A PH domain is found at 42–140 (PKKLCGYLSK…WLQQLQMKRW (99 aa)). The disordered stretch occupies residues 228-296 (KQAQATAHGP…KRQSNTFPFF (69 aa)). The span at 261–270 (IPEKEPEDPP) shows a compositional bias: basic and acidic residues. The interval 297–435 (SDGLARSRTA…KLTEDLAQPQ (139 aa)) is interaction with RAC1. Coiled coils occupy residues 303 to 332 (SRTAQEKVVALEQQVLMLTKELKSQKELVI), 361 to 418 (LELV…AKQQ), and 444 to 477 (FLSQQERLEHLKDDMEAYRTQNRFLNSEIHQVTK). The Rab-GAP TBC domain occupies 621-813 (GVPREHRPRV…RVWDAFLYEG (193 aa)). Positions 871–906 (MKQLRQLRAAHRERLEAELRELELLKAEYLERRASR) form a coiled coil. Phosphoserine is present on serine 916.

As to quaternary structure, interacts with activated RAC1 and CDH1.

It localises to the cytoplasm. Its subcellular location is the cytoplasmic vesicle. It is found in the cell junction. In terms of biological role, acts as a GTPase-activating protein for RAB7A. Signal effector acting as a linker between RAC1 and RAB7A, leading to RAB7A inactivation and subsequent inhibition of cadherin degradation and reduced cell-cell adhesion. This Rattus norvegicus (Rat) protein is TBC1 domain family member 2A (Tbc1d2).